Reading from the N-terminus, the 505-residue chain is MRSVAVGAVDFSGRPFHFLGIGGIGMSALAYVLAKRHLPVSGSDLRRTHITDRLESVGAKIFQDQVPENLDYFQSLQVNPAVALPTGSPGSGLTLEQIAESASNGVNGNGRYQTHCLPQVVCSTAINEGNLEYQGAIAKNCPIYHRSDILAALIAESRGIGVAGTHGKTTTSSLIGYVLKEAGLDPTIVVGGEVDAWQGNAYLGSGEYLVAEVDESDGSLTKHHPEIGIVTNIELDHPDHYSTLAEVVEIFRTFESHCQTLIGCLDCGVVRQHLSPTITYSLENHPEADYQARQIKRQAHGNEVEVWERGVCLGTMTVTLPGDHNISNALAAVAVGRLLGLDFPVIAQAIASFNGAKRRFECKGYCNGITFIDDYAHHPSELLATLAAAKQKVTHGKYERVVAIFQPHRYSRTHTFMAEFATAFKDADLVVLTDIYSAGEQNPYNIRGEDLAKAVGQHHGHVVYQPRLTELREFLPKVLQSGDLALFLGAGNLNQQIAPVLAACA.

Residue 164-170 (GTHGKTT) coordinates ATP.

This sequence belongs to the MurCDEF family.

The protein resides in the cytoplasm. It carries out the reaction UDP-N-acetyl-alpha-D-muramate + L-alanine + ATP = UDP-N-acetyl-alpha-D-muramoyl-L-alanine + ADP + phosphate + H(+). It functions in the pathway cell wall biogenesis; peptidoglycan biosynthesis. Functionally, cell wall formation. In Synechocystis sp. (strain ATCC 27184 / PCC 6803 / Kazusa), this protein is UDP-N-acetylmuramate--L-alanine ligase.